The sequence spans 556 residues: Potassium-transporting ATPase potassium-binding subunit (556 aa).

A run of 10 helical transmembrane segments spans residues 6 to 26, 65 to 85, 133 to 153, 176 to 196, 249 to 269, 283 to 303, 378 to 398, 419 to 439, 483 to 503, and 526 to 546; these read AGLIFLAVLVAALVAVHVPLG, GVLAFSSVSIIFLFVLQLVQG, GLAVQNFVSAAVGMAVAVALV, LRILLPISIVGAVLLVAGGAI, PTAWTNWLEVFLILVIGFSLP, YAIASVMASLYLLSTGFMLWF, GLYGMLVLAVITVFVAGLMVG, YFLVTPLIVLTGTAIAMALPG, ALGLAMAFGRFLPIVLVLALA, and FVGMVAGVTLIVVALTFLPML.

It belongs to the KdpA family. As to quaternary structure, the system is composed of three essential subunits: KdpA, KdpB and KdpC.

It is found in the cell membrane. Part of the high-affinity ATP-driven potassium transport (or Kdp) system, which catalyzes the hydrolysis of ATP coupled with the electrogenic transport of potassium into the cytoplasm. This subunit binds the extracellular potassium ions and delivers the ions to the membrane domain of KdpB through an intramembrane tunnel. This Mycolicibacterium paratuberculosis (strain ATCC BAA-968 / K-10) (Mycobacterium paratuberculosis) protein is Potassium-transporting ATPase potassium-binding subunit.